A 407-amino-acid polypeptide reads, in one-letter code: 1-deoxy-D-xylulose 5-phosphate reductoisomerase (407 aa).

Residues threonine 25, glycine 26, serine 27, isoleucine 28, asparagine 53, and asparagine 136 each coordinate NADPH. 1-deoxy-D-xylulose 5-phosphate is bound at residue lysine 137. Glutamate 138 is a binding site for NADPH. Aspartate 162 contacts Mn(2+). 4 residues coordinate 1-deoxy-D-xylulose 5-phosphate: serine 163, glutamate 164, serine 188, and histidine 211. Mn(2+) is bound at residue glutamate 164. Glycine 217 is a binding site for NADPH. Positions 224, 229, 230, and 233 each coordinate 1-deoxy-D-xylulose 5-phosphate. Glutamate 233 is a binding site for Mn(2+).

The protein belongs to the DXR family. Mg(2+) serves as cofactor. Mn(2+) is required as a cofactor.

It carries out the reaction 2-C-methyl-D-erythritol 4-phosphate + NADP(+) = 1-deoxy-D-xylulose 5-phosphate + NADPH + H(+). Its pathway is isoprenoid biosynthesis; isopentenyl diphosphate biosynthesis via DXP pathway; isopentenyl diphosphate from 1-deoxy-D-xylulose 5-phosphate: step 1/6. In terms of biological role, catalyzes the NADPH-dependent rearrangement and reduction of 1-deoxy-D-xylulose-5-phosphate (DXP) to 2-C-methyl-D-erythritol 4-phosphate (MEP). The sequence is that of 1-deoxy-D-xylulose 5-phosphate reductoisomerase from Rhodopseudomonas palustris (strain TIE-1).